The sequence spans 146 residues: Transcriptional regulator MraZ (146 aa).

2 SpoVT-AbrB domains span residues 6–49 and 78–121; these read TYDH…TEEE and THEV…DQKS.

This sequence belongs to the MraZ family. In terms of assembly, forms oligomers.

The protein resides in the cytoplasm. The protein localises to the nucleoid. The protein is Transcriptional regulator MraZ of Mesoplasma florum (strain ATCC 33453 / NBRC 100688 / NCTC 11704 / L1) (Acholeplasma florum).